Here is a 255-residue protein sequence, read N- to C-terminus: ATP synthase subunit a (255 aa).

6 helical membrane passes run 28–48, 86–106, 125–145, 164–184, 203–223, and 224–244; these read VDSL…FWLG, IAPL…MDLV, ILPT…FFLI, FHPF…IELI, LIFI…GTPW, and AIFH…LTVV.

Belongs to the ATPase A chain family. In terms of assembly, F-type ATPases have 2 components, CF(1) - the catalytic core - and CF(0) - the membrane proton channel. CF(1) has five subunits: alpha(3), beta(3), gamma(1), delta(1), epsilon(1). CF(0) has three main subunits: a(1), b(2) and c(9-12). The alpha and beta chains form an alternating ring which encloses part of the gamma chain. CF(1) is attached to CF(0) by a central stalk formed by the gamma and epsilon chains, while a peripheral stalk is formed by the delta and b chains.

Its subcellular location is the cell inner membrane. Key component of the proton channel; it plays a direct role in the translocation of protons across the membrane. This is ATP synthase subunit a from Alkalilimnicola ehrlichii (strain ATCC BAA-1101 / DSM 17681 / MLHE-1).